The primary structure comprises 130 residues: Annexin A1 (130 aa).

An Isoglutamyl lysine isopeptide (Gln-Lys) (interchain with K-?) cross-link involves residue Gln19. A Phosphoserine; by PKC modification is found at Ser24. Annexin repeat units lie at residues 37-108 and 109-130; these read FDPS…ALLK and TPAQ…TDRR. Ca(2+)-binding residues include Gly54, Val55, Glu57, Lys92, Leu95, Glu100, Met122, Gly124, Gly126, Thr127, and Arg130.

This sequence belongs to the annexin family.

The protein localises to the nucleus. It localises to the cytoplasm. The protein resides in the cell projection. Its subcellular location is the cilium. It is found in the basolateral cell membrane. The protein localises to the lateral cell membrane. It localises to the cell membrane. The protein resides in the apical cell membrane. Its subcellular location is the membrane. It is found in the early endosome. The protein localises to the cytoplasmic vesicle membrane. It localises to the endosome membrane. The protein resides in the secreted. Its subcellular location is the extracellular space. It is found in the extracellular exosome. The protein localises to the cytoplasmic vesicle. It localises to the secretory vesicle lumen. The protein resides in the phagocytic cup. Plays important roles in the innate immune response as effector of glucocorticoid-mediated responses and regulator of the inflammatory process. Has anti-inflammatory activity. Plays a role in glucocorticoid-mediated down-regulation of the early phase of the inflammatory response. Promotes resolution of inflammation and wound healing. Functions at least in part by activating the formyl peptide receptors and downstream signaling cascades. Promotes chemotaxis of granulocytes and monocytes via activation of the formyl peptide receptors. Contributes to the adaptive immune response by enhancing signaling cascades that are triggered by T-cell activation, regulates differentiation and proliferation of activated T-cells. Promotes the differentiation of T-cells into Th1 cells and negatively regulates differentiation into Th2 cells. Has no effect on unstimulated T-cells. Promotes rearrangement of the actin cytoskeleton, cell polarization and cell migration. Negatively regulates hormone exocytosis via activation of the formyl peptide receptors and reorganization of the actin cytoskeleton. Has high affinity for Ca(2+) and can bind up to eight Ca(2+) ions. Displays Ca(2+)-dependent binding to phospholipid membranes. Plays a role in the formation of phagocytic cups and phagosomes. Plays a role in phagocytosis by mediating the Ca(2+)-dependent interaction between phagosomes and the actin cytoskeleton. The sequence is that of Annexin A1 (ANXA1) from Gallus gallus (Chicken).